The sequence spans 439 residues: NETWWYNPYMDIHSHWKQFDQVPAAVYYSLGIFIAICGIIGCAGNGIVIYLFTKTKSLQTPANMFIINLAFSDFTFSLVNGFPMMTISCFLKHWVFGQAACKVYGLIGGIFGLTSIMTMTMISIDRYNVIRRPMSASKKMSHRKAFIMIVFVWIWSTIWAIGPIFGWGAYQLEGVLCNCSFDYITRDASTRSNIVCMYIFAFMFPIVVIFFCYFNIVMSVSNHEKEMAAMAKRLNAKELRKAQAGASAEMKLAKISIVIVTQSLLSWSPYAIVALLAQFGPIEWVTPYAAQLPVMFAKASAIHNPMIYSVSHPKFREAIASNFPWILTCCQYDEKEIEDDKDAEAEIPAAEQSGGESVDAAQMKEMMAMMQKMQAQQQQQPAYPPQGYPPQGYPPPPPQGYPPQGYPPQGYPPQGYPPPPQGPPPQGPPPQAAPPQGVD.

A glycan (N-linked (GlcNAc...) asparagine) is linked at N1. Over 1 to 26 (NETWWYNPYMDIHSHWKQFDQVPAAV) the chain is Extracellular. The helical transmembrane segment at 27–51 (YYSLGIFIAICGIIGCAGNGIVIYL) threads the bilayer. At 52 to 63 (FTKTKSLQTPAN) the chain is on the cytoplasmic side. Residues 64–90 (MFIINLAFSDFTFSLVNGFPMMTISCF) form a helical membrane-spanning segment. Over 91 to 102 (LKHWVFGQAACK) the chain is Extracellular. C101 and C179 are disulfide-bonded. A helical membrane pass occupies residues 103-124 (VYGLIGGIFGLTSIMTMTMISI). Positions 125–127 (DRY) match the 'Ionic lock' involved in activated form stabilization motif. Residues 125–144 (DRYNVIRRPMSASKKMSHRK) lie on the Cytoplasmic side of the membrane. Residues 145–165 (AFIMIVFVWIWSTIWAIGPIF) traverse the membrane as a helical segment. At 166–192 (GWGAYQLEGVLCNCSFDYITRDASTRS) the chain is on the extracellular side. A helical transmembrane segment spans residues 193–217 (NIVCMYIFAFMFPIVVIFFCYFNIV). Residues 218-254 (MSVSNHEKEMAAMAKRLNAKELRKAQAGASAEMKLAK) lie on the Cytoplasmic side of the membrane. Residues 255-276 (ISIVIVTQSLLSWSPYAIVALL) form a helical membrane-spanning segment. Topologically, residues 277–286 (AQFGPIEWVT) are extracellular. A helical membrane pass occupies residues 287-308 (PYAAQLPVMFAKASAIHNPMIY). The residue at position 298 (K298) is an N6-(retinylidene)lysine. The Cytoplasmic portion of the chain corresponds to 309 to 439 (SVSHPKFREA…PQAAPPQGVD (131 aa)). S-palmitoyl cysteine attachment occurs at residues C329 and C330. The segment covering 369-381 (MMQKMQAQQQQQP) has biased composition (low complexity). Positions 369–439 (MMQKMQAQQQ…PQAAPPQGVD (71 aa)) are disordered. The span at 382 to 433 (AYPPQGYPPQGYPPPPPQGYPPQGYPPQGYPPQGYPPPPQGPPPQGPPPQAA) shows a compositional bias: pro residues.

This sequence belongs to the G-protein coupled receptor 1 family. Opsin subfamily. In terms of processing, contains one covalently linked retinal chromophore. Upon light absorption, the covalently bound 11-cis-retinal is converted to all-trans-retinal. After hydrolysis of the Schiff base and release of the covalently bound all-trans-retinal, active rhodopsin is regenerated by binding of a fresh molecule of 11-cis-retinal.

The protein resides in the cell projection. It localises to the rhabdomere membrane. Its function is as follows. Photoreceptor required for image-forming vision at low light intensity. Light-induced isomerization of 11-cis to all-trans retinal triggers a conformational change that activates signaling via G-proteins. Signaling mediates the activation of phospholipase C. Subsequent receptor phosphorylation mediates displacement of the bound G-protein alpha subunit by arrestin and terminates signaling. This Alloteuthis subulata (Squid) protein is Rhodopsin (RHO).